The primary structure comprises 1614 residues: Low-density lipoprotein receptor-related protein 5 (1614 aa).

The first 30 residues, 1-30 (METAPTRAPPPPPPPLLLLVLYCSLVPAAA), serve as a signal peptide directing secretion. The interval 31 to 287 (SPLLLFANRR…YSPMDIQVLS (257 aa)) is beta-propeller 1. Over 31–1383 (SPLLLFANRR…PPSDDIPAHS (1353 aa)) the chain is Extracellular. 5 LDL-receptor class B repeats span residues 74 to 118 (GAVY…DWVG), 119 to 161 (KKLY…DPAH), 162 to 205 (GYMY…DLEE), 206 to 246 (QKLY…TLSG), and 247 to 289 (DTLY…LSQE). 2 N-linked (GlcNAc...) asparagine glycosylation sites follow: asparagine 92 and asparagine 137. The 43-residue stretch at 294 to 336 (FHTPCEEDNGGCSHLCLLSPREPFYSCACPTGVQLQDNGKTCK) folds into the EGF-like 1 domain. 3 disulfides stabilise this stretch: cysteine 298-cysteine 309, cysteine 305-cysteine 320, and cysteine 322-cysteine 335. Residues 340–601 (EEVLLLARRT…AVNVAKVVGT (262 aa)) are beta-propeller 2. LDL-receptor class B repeat units follow at residues 384 to 426 (GYVY…DWVA), 427 to 469 (RNLY…HPVM), 470 to 513 (GLMY…DLQE), 514 to 556 (GKLY…LGDF), and 557 to 599 (IYWT…AKVV). Asparagine 445 and asparagine 498 each carry an N-linked (GlcNAc...) asparagine glycan. One can recognise an EGF-like 2 domain in the interval 600–640 (GTNPCADGNGGCSHLCFFTPRATKCGCPIGLELLSDMKTCI). Cystine bridges form between cysteine 604/cysteine 615, cysteine 611/cysteine 624, and cysteine 626/cysteine 639. The beta-propeller 3 stretch occupies residues 643 to 902 (EAFLVFTSRA…VFHSSRQDGL (260 aa)). 5 LDL-receptor class B repeats span residues 686–728 (NHIY…DWMG), 729–771 (KNLY…DPTK), 772–814 (GYIY…DYAD), 815–854 (QRLY…TQYS), and 855–897 (DYIY…FHSS). N-linked (GlcNAc...) asparagine glycosylation occurs at asparagine 704. Residue asparagine 877 is glycosylated (N-linked (GlcNAc...) asparagine). Residues 901 to 941 (GLNDCVHSNGQCGQLCLAIPGGHRCGCASHYTLDPSSRNCS) form the EGF-like 3 domain. Disulfide bonds link cysteine 905/cysteine 916, cysteine 912/cysteine 925, and cysteine 927/cysteine 940. The beta-propeller 4 stretch occupies residues 944–1211 (STFLLFSQKF…AVEEVSLEEF (268 aa)). 5 LDL-receptor class B repeats span residues 988–1034 (KFIY…DIYS), 1035–1077 (RTLF…NAER), 1078–1122 (GYMY…DNAL), 1123–1164 (GKLF…VLGR), and 1165–1206 (HLYW…VEEV). Residues 1002 to 1025 (AKDDGTQPSMLTSPSQSLSPDRQP) are disordered. A compositionally biased stretch (polar residues) spans 1007 to 1021 (TQPSMLTSPSQSLSP). The EGF-like 4 domain maps to 1212-1253 (SAHPCARDNGGCSHICIAKGDGTPRCSCPVHLVLLQNLLTCG). 12 disulfides stabilise this stretch: cysteine 1216/cysteine 1227, cysteine 1223/cysteine 1237, cysteine 1239/cysteine 1252, cysteine 1258/cysteine 1272, cysteine 1265/cysteine 1285, cysteine 1279/cysteine 1294, cysteine 1297/cysteine 1309, cysteine 1304/cysteine 1322, cysteine 1316/cysteine 1331, cysteine 1335/cysteine 1347, cysteine 1342/cysteine 1360, and cysteine 1354/cysteine 1369. 3 LDL-receptor class A domains span residues 1257-1295 (TCSP…EGCP), 1296-1332 (VCSA…ANCD), and 1334-1370 (VCLP…LMCE). Residues 1384-1406 (SAIGPVIGIILSLFVMGGVYFVC) traverse the membrane as a helical segment. The Cytoplasmic segment spans residues 1407–1614 (QRVMCQRYTG…PPPSPCTDSS (208 aa)). The segment at 1474–1498 (RNHVTGASSSSSSSTKATLYPPILN) is disordered. The PPPSP motif A motif lies at 1499-1505 (PPPSPAT). The short motif at 1537–1544 (PPTTPCST) is the PPPSP motif B element. Residues 1567–1599 (SDSDPYPPPPTPHSQYLSAEDSCPPSPGTERSY) form a disordered region. The PPPSP motif C signature appears at 1573-1580 (PPPPTPHS). The PPPSP motif D signature appears at 1590-1595 (PPSPGT). Positions 1604 to 1611 (PPPPSPCT) match the PPPSP motif E motif.

It belongs to the LDLR family. As to quaternary structure, homodimer; disulfide-linked. Forms phosphorylated oligomer aggregates on Wnt-signaling. Component of a WNT-signaling complex that contains a WNT protein, a FZD protein and LRP5 or LRP6. Interacts with FZD8; the interaction is formed on WNT-binding and signaling. Interacts (via the phosphorylated PPPSP motif domains) with AXIN1; the interaction prevents inhibition of beta-catenin phosphorylation and signaling and is enhanced in the presence of GSK3B and WNT1 or WNT3A. Interacts (via beta-propeller regions 3 and 4) with DKK1; the interaction, enhanced by MESD and/or KREMEN, inhibits beta-catenin signaling by preventing GSK3-mediated phosphorylation of the PPPSP motifs and subsequent, AXIN1 binding. Interacts with CSNK1E. Interacts with SOST; the interaction antagonizes canonical Wnt signaling. Interacts with APCDD1. Interacts with MESD; the interaction prevents the formation of LRP5 aggregates, targets LRP5 to the plasma membrane and, when complexed with KREMEN2, increases DKK1 binding. Interacts with CAPRIN2. Post-translationally, phosphorylation of cytoplasmic PPPSP motifs regulates the signal transduction of the Wnt signaling pathway through acting as a docking site for AXIN1. As to expression, widely expressed, with the highest expression levels in liver, heart, and lung and the lowest levels in brain and spleen.

It localises to the membrane. It is found in the endoplasmic reticulum. Its function is as follows. Acts as a coreceptor with members of the frizzled family of seven-transmembrane spanning receptors to transduce signal by Wnt proteins. Activates the canonical Wnt signaling pathway that controls cell fate determination and self-renewal during embryonic development and adult tissue regeneration. In particular, may play an important role in the development of the posterior patterning of the epiblast during gastrulation. During bone development, regulates osteoblast proliferation and differentiation thus determining bone mass. Mechanistically, the formation of the signaling complex between Wnt ligand, frizzled receptor and LRP5 coreceptor promotes the recruitment of AXIN1 to LRP5, stabilizing beta-catenin/CTNNB1 and activating TCF/LEF-mediated transcriptional programs. Acts as a coreceptor for non-Wnt proteins, such as norrin/NDP. Binding of norrin/NDP to frizzled 4/FZD4-LRP5 receptor complex triggers beta-catenin/CTNNB1-dependent signaling known to be required for retinal vascular development. Plays a role in controlling postnatal vascular regression in retina via macrophage-induced endothelial cell apoptosis. This is Low-density lipoprotein receptor-related protein 5 from Mus musculus (Mouse).